Consider the following 506-residue polypeptide: Glycine--tRNA ligase (506 aa).

Positions 99 and 189 each coordinate substrate. Residues 221–223, 231–236, 306–307, and 365–368 each bind ATP; these read RNE, FRVREL, EI, and GVDR. 236–240 lines the substrate pocket; that stretch reads LEQME. Position 361–365 (361–365) interacts with substrate; it reads EPSAG.

Belongs to the class-II aminoacyl-tRNA synthetase family. Homodimer.

Its subcellular location is the cytoplasm. It carries out the reaction tRNA(Gly) + glycine + ATP = glycyl-tRNA(Gly) + AMP + diphosphate. In terms of biological role, catalyzes the attachment of glycine to tRNA(Gly). This Deinococcus radiodurans (strain ATCC 13939 / DSM 20539 / JCM 16871 / CCUG 27074 / LMG 4051 / NBRC 15346 / NCIMB 9279 / VKM B-1422 / R1) protein is Glycine--tRNA ligase.